The chain runs to 143 residues: Large ribosomal subunit protein uL11 (143 aa).

This sequence belongs to the universal ribosomal protein uL11 family. As to quaternary structure, part of the ribosomal stalk of the 50S ribosomal subunit. Interacts with L10 and the large rRNA to form the base of the stalk. L10 forms an elongated spine to which L12 dimers bind in a sequential fashion forming a multimeric L10(L12)X complex. In terms of processing, one or more lysine residues are methylated.

Forms part of the ribosomal stalk which helps the ribosome interact with GTP-bound translation factors. This Pseudomonas savastanoi pv. phaseolicola (strain 1448A / Race 6) (Pseudomonas syringae pv. phaseolicola (strain 1448A / Race 6)) protein is Large ribosomal subunit protein uL11.